The following is a 186-amino-acid chain: M-phase phosphoprotein 6 homolog (186 aa).

The residue at position 2 (Ser2) is an N-acetylserine. Disordered regions lie at residues 22-47 (KFGK…VEPI) and 95-186 (SNVG…NSKK). Positions 32–42 (SNSNTPSNINS) are enriched in low complexity. A Phosphoserine modification is found at Ser42. A compositionally biased stretch (basic and acidic residues) spans 122 to 147 (SGSRKRKFDEGEQNEDEKRDAKDKEF). The residue at position 150 (Ser150) is a Phosphoserine. Basic residues predominate over residues 168–186 (IKKKKTNHNGKNKNRNSKK).

This sequence belongs to the MPP6 family. As to quaternary structure, associates with the RNA exosome complex.

The protein localises to the nucleus. In terms of biological role, RNA-binding protein that associates with the RNA exosome complex. Involved in surveillance of pre-rRNAs and pre-mRNAs, and the degradation of cryptic non-coding RNAs (ncRNA) derived from intergenic regions and the ribosomal DNA spacer heterochromatin. This chain is M-phase phosphoprotein 6 homolog (MPP6), found in Saccharomyces cerevisiae (strain ATCC 204508 / S288c) (Baker's yeast).